The chain runs to 550 residues: Phospholipase B-like 1 (550 aa).

Residues 1–39 (MCHRSHGRSLRPPSPLLLLLPLLLQSPWAAGAAEKHNSA) form the signal peptide. Asn72 is a glycosylation site (N-linked (GlcNAc...) (high mannose) asparagine; alternate). N-linked (GlcNAc...) (hybrid) asparagine; alternate glycosylation occurs at Asn72. The propeptide at 210 to 228 (LSPTKSSSLKKFKIWEMGH) is removed in mature form. 2 N-linked (GlcNAc...) (high mannose) asparagine; alternate glycosylation sites follow: Asn309 and Asn412. Asn309 and Asn412 each carry an N-linked (GlcNAc...) (hybrid) asparagine; alternate glycan. Disulfide bonds link Cys471–Cys476 and Cys475–Cys490. Asn527 carries an N-linked (GlcNAc...) (high mannose) asparagine; alternate glycan. Asn527 is a glycosylation site (N-linked (GlcNAc...) (hybrid) asparagine; alternate).

This sequence belongs to the phospholipase B-like family. As to quaternary structure, may form a homodimer, each monomer is composed of a chain A and a chain B. In terms of processing, the maturation cleavages that produces chains A and B are required to open the putative substrate binding pocket. Both chains A and B remain associated in the mature protein.

Its subcellular location is the lysosome. Functionally, exhibits weak phospholipase activity, acting on various phospholipids, including phosphatidylcholine, phosphatidylinositol, phosphatidylethanolamine and lysophospholipids. However, in view of the small size of the putative binding pocket, it has been proposed that it may act rather as an amidase or a peptidase. This is Phospholipase B-like 1 (Plbd1) from Rattus norvegicus (Rat).